A 450-amino-acid chain; its full sequence is Protein tweety homolog 1 (450 aa).

Over 1-43 (MGAPPGYRPSAWVHLLHQLPRADFQLRPVPSGFAPQEQEYQQA) the chain is Extracellular. A helical membrane pass occupies residues 44 to 64 (LLLVAALAGLGLGLSLIFIAV). The Cytoplasmic segment spans residues 65-88 (YLIRFCCCRPPEPPGSKTPSPGGG). The helical transmembrane segment at 89-109 (CVTWSCIVALLAGCIGIGIGF) threads the bilayer. Topologically, residues 110-214 (YGNSETSDGV…DVSFVEEYRW (105 aa)) are extracellular. Residue asparagine 130 is glycosylated (N-linked (GlcNAc...) asparagine). Residues 215–235 (LAYVLLLLLELLVCLFTLLGL) traverse the membrane as a helical segment. Residues 236-240 (AKQSK) lie on the Cytoplasmic side of the membrane. Residues 241–261 (WLVIVMTVMSLLVLVLSWGSM) traverse the membrane as a helical segment. Residues 262-390 (GLEAATAVGL…LRGLCEDALE (129 aa)) lie on the Extracellular side of the membrane. 2 N-linked (GlcNAc...) asparagine glycosylation sites follow: asparagine 284 and asparagine 355. A disulfide bond links cysteine 303 and cysteine 370. A helical membrane pass occupies residues 391–411 (GLLFLLLFSLLSAGALATALC). Over 412 to 450 (SLPRAWALFPPSDDYDDTDDDDPFNPQESKRFVQWQSSI) the chain is Cytoplasmic. The segment at 428–450 (DTDDDDPFNPQESKRFVQWQSSI) is disordered. Position 440 is a phosphoserine (serine 440).

This sequence belongs to the tweety family. As to quaternary structure, homotetramer; disulfide-linked. Homodimer. N-glycosylated. Contains high-mannose, hybrid and complex oligosaccharides.

It is found in the cell membrane. It catalyses the reaction chloride(in) = chloride(out). It carries out the reaction L-glutamate(out) = L-glutamate(in). Calcium-independent, swelling-dependent volume-regulated anion channel (VRAC-swell) which plays a pivotal role in the process of regulatory volume decrease (RVD) in the brain through the efflux of anions like chloride and organic osmolytes like glutamate. The protein is Protein tweety homolog 1 (TTYH1) of Macaca fascicularis (Crab-eating macaque).